An 896-amino-acid polypeptide reads, in one-letter code: Protein bride of sevenless (896 aa).

Positions 1-31 (MKVMDALQSGRRKPLPVALLCILVTVFCVLE) are cleaved as a signal peptide. Topologically, residues 32–530 (CHGADLTSPT…MFWRIKMDTW (499 aa)) are extracellular. The tract at residues 38 to 84 (TSPTKKSAPLRITKPQPTSQQAKPISITTRAPTTVASTTDDEVSSSV) is disordered. The span at 52–64 (PQPTSQQAKPISI) shows a compositional bias: polar residues. A compositionally biased stretch (low complexity) spans 65-84 (TTRAPTTVASTTDDEVSSSV). 4 N-linked (GlcNAc...) asparagine glycosylation sites follow: asparagine 183, asparagine 307, asparagine 474, and asparagine 485. Transmembrane regions (helical) follow at residues 531 to 554 (VATGLTAAILGLIATLAILVFIVV), 570 to 588 (ILLLLSLILVFCSFVPYSI), 615 to 637 (VFIMTLVYCFVFSLLLCRAVMLA), 655 to 676 (AVICAFSVVAQVGMSVQLLVVM), 693 to 712 (WLWGLLAYDFALLCCVGALI), 728 to 748 (IVIGSVLIMVIWVAWIALSLF), and 759 to 781 (LGLQASGWAVLVGILIPRTFLIV). Residues 782–896 (RGIERSDIAQ…SPDHNKITRF (115 aa)) are Cytoplasmic-facing. Disordered stretches follow at residues 825–844 (SQDEVNHQSPSEIPTLPLRG) and 861–896 (ANINPQRPPPRPQQSPSRSSVSSLPPSPDHNKITRF). Positions 874 to 884 (QSPSRSSVSSL) are enriched in low complexity.

The protein belongs to the G-protein coupled receptor 3 family. Expressed exclusively by R8 photoreceptor cells and is internalized in a sev-dependent manner by R7 cells.

Its subcellular location is the cell membrane. Its function is as follows. Acts as a ligand for sevenless tyrosine-kinase receptor during eye development. This Drosophila melanogaster (Fruit fly) protein is Protein bride of sevenless (boss).